A 73-amino-acid chain; its full sequence is Putative sodium channel toxin Ts39 (73 aa).

The N-terminal stretch at 1 to 22 (MKTLNFCLFLVIISSLTVRVFC) is a signal peptide. Positions 24–73 (NDRFLTVNDNYVICLYINKSFVNCENLCKAYMNAKDGFCRQPHCFCTDVE) constitute an LCN-type CS-alpha/beta domain. 3 cysteine pairs are disulfide-bonded: cysteine 37–cysteine 62, cysteine 47–cysteine 67, and cysteine 51–cysteine 69.

This sequence belongs to the long (3 C-C) scorpion toxin superfamily. Sodium channel inhibitor family. Expressed by the venom gland.

It is found in the secreted. Its function is as follows. Putative sodium channel toxin. This chain is Putative sodium channel toxin Ts39, found in Tityus serrulatus (Brazilian scorpion).